The primary structure comprises 324 residues: Methionyl-tRNA formyltransferase (324 aa).

Position 112 to 115 (112 to 115) interacts with (6S)-5,6,7,8-tetrahydrofolate; the sequence is SILP.

Belongs to the Fmt family.

The catalysed reaction is L-methionyl-tRNA(fMet) + (6R)-10-formyltetrahydrofolate = N-formyl-L-methionyl-tRNA(fMet) + (6S)-5,6,7,8-tetrahydrofolate + H(+). Its function is as follows. Attaches a formyl group to the free amino group of methionyl-tRNA(fMet). The formyl group appears to play a dual role in the initiator identity of N-formylmethionyl-tRNA by promoting its recognition by IF2 and preventing the misappropriation of this tRNA by the elongation apparatus. This Shewanella loihica (strain ATCC BAA-1088 / PV-4) protein is Methionyl-tRNA formyltransferase.